A 570-amino-acid polypeptide reads, in one-letter code: Acetolactate synthase (570 aa).

Glutamate 60 serves as a coordination point for thiamine diphosphate. FAD is bound by residues glutamine 162, 266-287, and 308-327; these read FRNQ…IGYD and DEII…LIGD. The tract at residues 399–479 is thiamine pyrophosphate binding; the sequence is SHAIWMSRYF…IVHIVWNDST (81 aa). Aspartate 450 provides a ligand contact to Mg(2+).

This sequence belongs to the TPP enzyme family. It depends on Mg(2+) as a cofactor. Requires thiamine diphosphate as cofactor.

It carries out the reaction 2 pyruvate + H(+) = (2S)-2-acetolactate + CO2. Its pathway is polyol metabolism; (R,R)-butane-2,3-diol biosynthesis; (R,R)-butane-2,3-diol from pyruvate: step 1/3. This is Acetolactate synthase (alsS) from Bacillus subtilis (strain 168).